Consider the following 133-residue polypeptide: FPRL1 inhibitory protein (133 aa).

Positions 1–28 (MKKNITKTIIASTVIAAGLLTQTNDAKA) are cleaved as a signal peptide.

It belongs to the CHIPS/FLIPr family.

The protein localises to the secreted. May be involved in countering the first line of host defense mechanisms. Impairs the leukocyte response to FPRL1 agonists by binding directly to host FPRL1. Exerts, in vitro, anti-inflammatory activity by inhibiting calcium mobilization and cell migration toward chemoattractants. The sequence is that of FPRL1 inhibitory protein (flr) from Staphylococcus aureus (strain Newman).